The chain runs to 184 residues: ATP synthase subunit b, chloroplastic (184 aa).

Residues 27–49 (LATNLINLSVVIGVLIFFGKGVL) form a helical membrane-spanning segment.

This sequence belongs to the ATPase B chain family. As to quaternary structure, F-type ATPases have 2 components, F(1) - the catalytic core - and F(0) - the membrane proton channel. F(1) has five subunits: alpha(3), beta(3), gamma(1), delta(1), epsilon(1). F(0) has four main subunits: a(1), b(1), b'(1) and c(10-14). The alpha and beta chains form an alternating ring which encloses part of the gamma chain. F(1) is attached to F(0) by a central stalk formed by the gamma and epsilon chains, while a peripheral stalk is formed by the delta, b and b' chains.

It is found in the plastid. It localises to the chloroplast thylakoid membrane. Its function is as follows. F(1)F(0) ATP synthase produces ATP from ADP in the presence of a proton or sodium gradient. F-type ATPases consist of two structural domains, F(1) containing the extramembraneous catalytic core and F(0) containing the membrane proton channel, linked together by a central stalk and a peripheral stalk. During catalysis, ATP synthesis in the catalytic domain of F(1) is coupled via a rotary mechanism of the central stalk subunits to proton translocation. In terms of biological role, component of the F(0) channel, it forms part of the peripheral stalk, linking F(1) to F(0). This Jasminum nudiflorum (Winter jasmine) protein is ATP synthase subunit b, chloroplastic.